Here is a 531-residue protein sequence, read N- to C-terminus: NAD(P)H-quinone oxidoreductase chain 4 (531 aa).

14 helical membrane passes run 9–29, 41–61, 93–113, 117–137, 141–161, 173–193, 217–237, 248–268, 282–302, 311–331, 337–357, 381–401, 422–442, and 469–489; these read FPWLSASILFPIGSAFVIPFF, FALSIALITFLITVGSYINGF, MPLILLTSFITALAVLAAWPV, PKLFFFLILVMDGGQIAVFAV, LLFFLTWELELIPVYLLLAIW, FIIYTAGSSIFILLAALAMGF, IFCYVGLLIAFGVKLPIVPLH, TAPVHMLLAGILLKMGGYALL, FAPLLIVLGVVNIIYAALTSF, IAYSSISHMGFVLIGIGSFSS, AMLQMVSHGLIGASLFFLVGA, FALWTACSLASLALPGMSGFV, VVMASLAAIGVILTPIYLLSM, and VYIIACLLLPIIGIGLYPRLV.

This sequence belongs to the complex I subunit 4 family.

It is found in the cellular thylakoid membrane. It catalyses the reaction a plastoquinone + NADH + (n+1) H(+)(in) = a plastoquinol + NAD(+) + n H(+)(out). The catalysed reaction is a plastoquinone + NADPH + (n+1) H(+)(in) = a plastoquinol + NADP(+) + n H(+)(out). In terms of biological role, NDH-1 shuttles electrons from NAD(P)H, via FMN and iron-sulfur (Fe-S) centers, to quinones in the respiratory chain. The immediate electron acceptor for the enzyme in this species is believed to be plastoquinone. Couples the redox reaction to proton translocation (for every two electrons transferred, four hydrogen ions are translocated across the cytoplasmic membrane), and thus conserves the redox energy in a proton gradient. The sequence is that of NAD(P)H-quinone oxidoreductase chain 4 from Prochlorococcus marinus (strain MIT 9301).